The primary structure comprises 136 residues: Large ribosomal subunit protein uL16 (136 aa).

Belongs to the universal ribosomal protein uL16 family. As to quaternary structure, part of the 50S ribosomal subunit.

Binds 23S rRNA and is also seen to make contacts with the A and possibly P site tRNAs. This chain is Large ribosomal subunit protein uL16, found in Shewanella denitrificans (strain OS217 / ATCC BAA-1090 / DSM 15013).